A 260-amino-acid polypeptide reads, in one-letter code: Indole-3-glycerol phosphate synthase (260 aa).

It belongs to the TrpC family.

The catalysed reaction is 1-(2-carboxyphenylamino)-1-deoxy-D-ribulose 5-phosphate + H(+) = (1S,2R)-1-C-(indol-3-yl)glycerol 3-phosphate + CO2 + H2O. The protein operates within amino-acid biosynthesis; L-tryptophan biosynthesis; L-tryptophan from chorismate: step 4/5. The chain is Indole-3-glycerol phosphate synthase from Staphylococcus aureus (strain MSSA476).